A 551-amino-acid polypeptide reads, in one-letter code: MSLKNWLLLRDIQYEGTFYKKFPHVYNIYVIGFIACISGLMFGFDIASMSSMIGTDVYKDYFSNPDSLTYGGITASMAGGSFLGSLISPNFSDAFGRKVSLHICAALWIIGAILQCAAQDQAMLIVGRVISGMGIGFGSSAAPVYCSEISPPKIRGTISGLFQFSVTVGIMVLFYIGYGCHFIDGAAAFRITWGLQMVPGLILMVGVFFIPESPRWLANHDRWEETSLIVANIVANGDVNNEQVRFQLEEIKEQVIIDSAAKNFGYKDLFRKKTLPKTIVGVSAQMWQQLCGMNVMMYYIVYIFNMAGYTGNTNLVASSIQYVLNVVMTIPALFLIDKFGRRPVLIIGGIFMFTWLFSVAGILATYSVPAPGGVNGDDTVTIQIPSENTSAANGVIASSYLFVCFFAPTWGIGIWIYCSEIFNNMERAKGSALSAATNWAFNFALAMFVPSAFKNISWKTYIIFGVFSVALTIQTFFMFPETKGKTLEEIDQMWVDNIPAWRTANYIPQLPIVKDEEGNKLGLLGNPQHLEDVHSNEKGLLDRSDSASNSN.

Topologically, residues 1 to 27 (MSLKNWLLLRDIQYEGTFYKKFPHVYN) are cytoplasmic. Residues 28 to 48 (IYVIGFIACISGLMFGFDIAS) traverse the membrane as a helical segment. Topologically, residues 49 to 70 (MSSMIGTDVYKDYFSNPDSLTY) are extracellular. A helical transmembrane segment spans residues 71–91 (GGITASMAGGSFLGSLISPNF). The Cytoplasmic portion of the chain corresponds to 92–98 (SDAFGRK). A helical membrane pass occupies residues 99 to 119 (VSLHICAALWIIGAILQCAAQ). Residues 120-123 (DQAM) are Extracellular-facing. Residues 124-144 (LIVGRVISGMGIGFGSSAAPV) form a helical membrane-spanning segment. Over 145–155 (YCSEISPPKIR) the chain is Cytoplasmic. Residues 156–176 (GTISGLFQFSVTVGIMVLFYI) traverse the membrane as a helical segment. At 177–190 (GYGCHFIDGAAAFR) the chain is on the extracellular side. Residues 191 to 211 (ITWGLQMVPGLILMVGVFFIP) form a helical membrane-spanning segment. The Cytoplasmic segment spans residues 212 to 289 (ESPRWLANHD…VGVSAQMWQQ (78 aa)). The helical transmembrane segment at 290-310 (LCGMNVMMYYIVYIFNMAGYT) threads the bilayer. At 311–315 (GNTNL) the chain is on the extracellular side. The chain crosses the membrane as a helical span at residues 316–336 (VASSIQYVLNVVMTIPALFLI). Over 337–343 (DKFGRRP) the chain is Cytoplasmic. Residues 344–364 (VLIIGGIFMFTWLFSVAGILA) form a helical membrane-spanning segment. The Extracellular portion of the chain corresponds to 365 to 395 (TYSVPAPGGVNGDDTVTIQIPSENTSAANGV). Residue Asn388 is glycosylated (N-linked (GlcNAc...) asparagine). A helical transmembrane segment spans residues 396–416 (IASSYLFVCFFAPTWGIGIWI). The Cytoplasmic portion of the chain corresponds to 417–432 (YCSEIFNNMERAKGSA). The chain crosses the membrane as a helical span at residues 433-453 (LSAATNWAFNFALAMFVPSAF). Topologically, residues 454–459 (KNISWK) are extracellular. Residues 460–480 (TYIIFGVFSVALTIQTFFMFP) form a helical membrane-spanning segment. The Cytoplasmic portion of the chain corresponds to 481–551 (ETKGKTLEEI…DRSDSASNSN (71 aa)).

This sequence belongs to the major facilitator superfamily. Sugar transporter (TC 2.A.1.1) family.

The protein resides in the membrane. In terms of biological role, high-affinity glucose transporter. In Kluyveromyces lactis (strain ATCC 8585 / CBS 2359 / DSM 70799 / NBRC 1267 / NRRL Y-1140 / WM37) (Yeast), this protein is High-affinity glucose transporter (HGT1).